Here is a 590-residue protein sequence, read N- to C-terminus: DNA mismatch repair protein MutL (590 aa).

The span at 335–351 (PLSSASPKLPESTTATA) shows a compositional bias: polar residues. Residues 335 to 354 (PLSSASPKLPESTTATAQPH) form a disordered region.

Belongs to the DNA mismatch repair MutL/HexB family.

Its function is as follows. This protein is involved in the repair of mismatches in DNA. It is required for dam-dependent methyl-directed DNA mismatch repair. May act as a 'molecular matchmaker', a protein that promotes the formation of a stable complex between two or more DNA-binding proteins in an ATP-dependent manner without itself being part of a final effector complex. The sequence is that of DNA mismatch repair protein MutL from Dichelobacter nodosus (strain VCS1703A).